We begin with the raw amino-acid sequence, 179 residues long: Adenine phosphoribosyltransferase (179 aa).

It belongs to the purine/pyrimidine phosphoribosyltransferase family. Homodimer.

The protein resides in the cytoplasm. It carries out the reaction AMP + diphosphate = 5-phospho-alpha-D-ribose 1-diphosphate + adenine. Its pathway is purine metabolism; AMP biosynthesis via salvage pathway; AMP from adenine: step 1/1. In terms of biological role, catalyzes a salvage reaction resulting in the formation of AMP, that is energically less costly than de novo synthesis. This Histophilus somni (strain 129Pt) (Haemophilus somnus) protein is Adenine phosphoribosyltransferase.